Consider the following 549-residue polypeptide: Glucose-6-phosphate isomerase (549 aa).

Lys-80, Lys-228, and Lys-234 each carry N6-acetyllysine. Glu-355 (proton donor) is an active-site residue. Residues His-386 and Lys-514 contribute to the active site.

It belongs to the GPI family.

It is found in the cytoplasm. The enzyme catalyses alpha-D-glucose 6-phosphate = beta-D-fructose 6-phosphate. Its pathway is carbohydrate biosynthesis; gluconeogenesis. It functions in the pathway carbohydrate degradation; glycolysis; D-glyceraldehyde 3-phosphate and glycerone phosphate from D-glucose: step 2/4. In terms of biological role, catalyzes the reversible isomerization of glucose-6-phosphate to fructose-6-phosphate. This is Glucose-6-phosphate isomerase from Escherichia coli (strain SMS-3-5 / SECEC).